Here is a 262-residue protein sequence, read N- to C-terminus: Small ribosomal subunit protein uS2 (262 aa).

The tract at residues 225 to 262 (KQGEQLTEEAKPEDKEDEKGQAEEKEVKEENNSANKEE) is disordered. Positions 232–262 (EEAKPEDKEDEKGQAEEKEVKEENNSANKEE) are enriched in basic and acidic residues.

Belongs to the universal ribosomal protein uS2 family.

This chain is Small ribosomal subunit protein uS2, found in Halothermothrix orenii (strain H 168 / OCM 544 / DSM 9562).